A 193-amino-acid chain; its full sequence is Pyridoxal 5'-phosphate synthase subunit PdxT (193 aa).

Residue 50-52 (GES) participates in L-glutamine binding. Catalysis depends on C82, which acts as the Nucleophile. L-glutamine is bound by residues R109 and 136–137 (IR). Active-site charge relay system residues include H172 and E174.

This sequence belongs to the glutaminase PdxT/SNO family. As to quaternary structure, in the presence of PdxS, forms a dodecamer of heterodimers. Only shows activity in the heterodimer.

It carries out the reaction aldehydo-D-ribose 5-phosphate + D-glyceraldehyde 3-phosphate + L-glutamine = pyridoxal 5'-phosphate + L-glutamate + phosphate + 3 H2O + H(+). The enzyme catalyses L-glutamine + H2O = L-glutamate + NH4(+). It participates in cofactor biosynthesis; pyridoxal 5'-phosphate biosynthesis. In terms of biological role, catalyzes the hydrolysis of glutamine to glutamate and ammonia as part of the biosynthesis of pyridoxal 5'-phosphate. The resulting ammonia molecule is channeled to the active site of PdxS. The polypeptide is Pyridoxal 5'-phosphate synthase subunit PdxT (Streptococcus pneumoniae (strain JJA)).